A 122-amino-acid chain; its full sequence is Ribosome-binding factor A (122 aa).

This sequence belongs to the RbfA family. In terms of assembly, monomer. Binds 30S ribosomal subunits, but not 50S ribosomal subunits or 70S ribosomes.

It is found in the cytoplasm. One of several proteins that assist in the late maturation steps of the functional core of the 30S ribosomal subunit. Associates with free 30S ribosomal subunits (but not with 30S subunits that are part of 70S ribosomes or polysomes). Required for efficient processing of 16S rRNA. May interact with the 5'-terminal helix region of 16S rRNA. The polypeptide is Ribosome-binding factor A (Caldanaerobacter subterraneus subsp. tengcongensis (strain DSM 15242 / JCM 11007 / NBRC 100824 / MB4) (Thermoanaerobacter tengcongensis)).